Reading from the N-terminus, the 144-residue chain is Large ribosomal subunit protein uL16 (144 aa).

This sequence belongs to the universal ribosomal protein uL16 family. As to quaternary structure, part of the 50S ribosomal subunit.

Functionally, binds 23S rRNA and is also seen to make contacts with the A and possibly P site tRNAs. This chain is Large ribosomal subunit protein uL16, found in Natranaerobius thermophilus (strain ATCC BAA-1301 / DSM 18059 / JW/NM-WN-LF).